The primary structure comprises 303 residues: Bifunctional protein FolD 2 (303 aa).

NADP(+) contacts are provided by residues 169–171 (GRS), Ser194, and Ile235.

The protein belongs to the tetrahydrofolate dehydrogenase/cyclohydrolase family. In terms of assembly, homodimer.

It catalyses the reaction (6R)-5,10-methylene-5,6,7,8-tetrahydrofolate + NADP(+) = (6R)-5,10-methenyltetrahydrofolate + NADPH. It carries out the reaction (6R)-5,10-methenyltetrahydrofolate + H2O = (6R)-10-formyltetrahydrofolate + H(+). It functions in the pathway one-carbon metabolism; tetrahydrofolate interconversion. Catalyzes the oxidation of 5,10-methylenetetrahydrofolate to 5,10-methenyltetrahydrofolate and then the hydrolysis of 5,10-methenyltetrahydrofolate to 10-formyltetrahydrofolate. This Pseudomonas putida (strain GB-1) protein is Bifunctional protein FolD 2.